We begin with the raw amino-acid sequence, 184 residues long: MSLWGVYTGPQPPKKPLQEMTQEEQAEEGARQMIGFMNSCPGKTVMAGVSGFALGGFFGLFMASMAYDTPIGTDAVKHISELPFKQQMKLQFTDMAKRSYSSAKNFGYIGMVYSGVECTIESLRAKHDIYNGVSAGCITGAGLAIRAGPQAALVGCAGFAAFSLAIDMYLNSDAAPPPKNDYDI.

Residues 1–26 form a disordered region; the sequence is MSLWGVYTGPQPPKKPLQEMTQEEQA. Disulfide bonds link C40–C118 and C137–C156. 2 helical membrane-spanning segments follow: residues 45-65 and 151-171; these read VMAG…MASM and AALV…MYLN.

It belongs to the Tim17/Tim22/Tim23 family. Component of the TIM22 complex, whose core is composed of TIM22 and TIM54, associated with the 70 kDa heterohexamer composed of TIM9 and TIM10 (or TIM8 and TIM13).

It is found in the mitochondrion inner membrane. In terms of biological role, essential core component of the TIM22 complex, a complex that mediates the import and insertion of multi-pass transmembrane proteins into the mitochondrial inner membrane. In the TIM22 complex, it constitutes the voltage-activated and signal-gated channel. Forms a twin-pore translocase that uses the membrane potential as external driving force in 2 voltage-dependent steps. This is Mitochondrial import inner membrane translocase subunit TIM22 from Candida albicans (strain SC5314 / ATCC MYA-2876) (Yeast).